Here is a 358-residue protein sequence, read N- to C-terminus: Arginine kinase (358 aa).

Positions 2 to 84 constitute a Phosphagen kinase N-terminal domain; it reads SDADLFSKLD…LDEVIKDYHK (83 aa). 57-61 provides a ligand contact to substrate; that stretch reads GVGIY. Residues 112–350 enclose the Phosphagen kinase C-terminal domain; it reads FIVSTRVRVG…EEILKREKEL (239 aa). Residues 115–119 and histidine 178 each bind ATP; that span reads STRVR. Glutamate 218 contacts substrate. Arginine 222 is a binding site for ATP. Cysteine 265 is a substrate binding site. Residues 274–278 and 303–308 each bind ATP; these read RASVH and RGIHGE. Residue glutamate 308 participates in substrate binding.

The protein belongs to the ATP:guanido phosphotransferase family.

It catalyses the reaction L-arginine + ATP = N(omega)-phospho-L-arginine + ADP + H(+). This is Arginine kinase from Turbo cornutus (Horned turban).